Here is a 518-residue protein sequence, read N- to C-terminus: GMP synthase [glutamine-hydrolyzing] (518 aa).

Positions 6-200 (RLLIIDFGSQ…FVKLAGFKGD (195 aa)) constitute a Glutamine amidotransferase type-1 domain. Cys-84 functions as the Nucleophile in the catalytic mechanism. Residues His-175 and Glu-177 contribute to the active site. The GMPS ATP-PPase domain maps to 201–393 (WTMGAYREEA…LGLPDSFIGR (193 aa)). 228-234 (SGGVDSS) is an ATP binding site.

Homodimer.

It carries out the reaction XMP + L-glutamine + ATP + H2O = GMP + L-glutamate + AMP + diphosphate + 2 H(+). The protein operates within purine metabolism; GMP biosynthesis; GMP from XMP (L-Gln route): step 1/1. Catalyzes the synthesis of GMP from XMP. The chain is GMP synthase [glutamine-hydrolyzing] from Cereibacter sphaeroides (strain ATCC 17025 / ATH 2.4.3) (Rhodobacter sphaeroides).